The sequence spans 177 residues: Large ribosomal subunit protein bL17 (177 aa).

Residues 136–177 (AEEEAPAVEAEATEAVEAPVEETAAAEAEAPAEEAADAEKAE) are disordered. Over residues 138 to 149 (EEAPAVEAEATE) the composition is skewed to acidic residues. Low complexity predominate over residues 150 to 164 (AVEAPVEETAAAEAE).

Belongs to the bacterial ribosomal protein bL17 family. As to quaternary structure, part of the 50S ribosomal subunit. Contacts protein L32.

In Bifidobacterium longum (strain NCC 2705), this protein is Large ribosomal subunit protein bL17.